The primary structure comprises 215 residues: Oligoribonuclease (215 aa).

The region spanning 5–170 (LVWIDCEMTG…ADIHESIREL (166 aa)) is the Exonuclease domain. The active site involves Tyr127.

It belongs to the oligoribonuclease family.

It localises to the cytoplasm. 3'-to-5' exoribonuclease specific for small oligoribonucleotides. This is Oligoribonuclease from Mycobacterium ulcerans (strain Agy99).